The chain runs to 202 residues: FMN-dependent NADH:quinone oxidoreductase (202 aa).

Residues Ser10 and Met95 to Phe98 each bind FMN.

The protein belongs to the azoreductase type 1 family. Homodimer. The cofactor is FMN.

It catalyses the reaction 2 a quinone + NADH + H(+) = 2 a 1,4-benzosemiquinone + NAD(+). The catalysed reaction is N,N-dimethyl-1,4-phenylenediamine + anthranilate + 2 NAD(+) = 2-(4-dimethylaminophenyl)diazenylbenzoate + 2 NADH + 2 H(+). Quinone reductase that provides resistance to thiol-specific stress caused by electrophilic quinones. Functionally, also exhibits azoreductase activity. Catalyzes the reductive cleavage of the azo bond in aromatic azo compounds to the corresponding amines. This chain is FMN-dependent NADH:quinone oxidoreductase, found in Alkalilimnicola ehrlichii (strain ATCC BAA-1101 / DSM 17681 / MLHE-1).